A 111-amino-acid chain; its full sequence is uncharacterized protein (111 aa).

A helical transmembrane segment spans residues 64-86 (VLCWLVLPLYCCNLLNLFFNIFL).

Its subcellular location is the membrane. This is an uncharacterized protein from Saccharomyces cerevisiae (strain ATCC 204508 / S288c) (Baker's yeast).